A 382-amino-acid chain; its full sequence is Cytochrome b (382 aa).

4 helical membrane-spanning segments follow: residues 33-53, 77-98, 113-133, and 178-198; these read FGSL…FLAM, WLVR…YTHI, WTVG…GYVL, and FFAF…IHLL. H83 and H97 together coordinate heme b. Heme b is bound by residues H182 and H196. H201 provides a ligand contact to a ubiquinone. 4 consecutive transmembrane segments (helical) span residues 226-246, 288-308, 320-340, and 347-367; these read LKDL…ALLT, LGGV…PFLQ, LTQL…WIGG, and FVSI…IIIP.

It belongs to the cytochrome b family. As to quaternary structure, the cytochrome bc1 complex contains 3 respiratory subunits (MT-CYB, CYC1 and UQCRFS1), 2 core proteins (UQCRC1 and UQCRC2) and probably 6 low-molecular weight proteins. Heme b is required as a cofactor.

It localises to the mitochondrion inner membrane. Its function is as follows. Component of the ubiquinol-cytochrome c reductase complex (complex III or cytochrome b-c1 complex) that is part of the mitochondrial respiratory chain. The b-c1 complex mediates electron transfer from ubiquinol to cytochrome c. Contributes to the generation of a proton gradient across the mitochondrial membrane that is then used for ATP synthesis. The sequence is that of Cytochrome b (mt-cyb) from Sigmops gracilis (Slender fangjaw).